A 72-amino-acid polypeptide reads, in one-letter code: Large ribosomal subunit protein bL31 (72 aa).

Zn(2+) contacts are provided by Cys17, Cys19, Cys37, and Cys40.

This sequence belongs to the bacterial ribosomal protein bL31 family. Type A subfamily. As to quaternary structure, part of the 50S ribosomal subunit. Requires Zn(2+) as cofactor.

In terms of biological role, binds the 23S rRNA. The chain is Large ribosomal subunit protein bL31 from Clostridium botulinum (strain Loch Maree / Type A3).